Consider the following 225-residue polypeptide: Small ribosomal subunit protein uS5 (225 aa).

In terms of domain architecture, S5 DRBM spans 57 to 120; sequence LEEQVLDVKL…AHAKLSLIKV (64 aa).

It belongs to the universal ribosomal protein uS5 family. As to quaternary structure, part of the 30S ribosomal subunit. Contacts protein S4.

With S4 and S12 plays an important role in translational accuracy. This is Small ribosomal subunit protein uS5 from Methanococcus maripaludis (strain DSM 14266 / JCM 13030 / NBRC 101832 / S2 / LL).